Reading from the N-terminus, the 61-residue chain is Venom protein 22.1 (61 aa).

The first 18 residues, 1–18, serve as a signal peptide directing secretion; the sequence is MDIKGLLVILFFVLLITG.

This sequence belongs to the non-disulfide-bridged peptide (NDBP) superfamily. Long chain multifunctional peptide (group 2) family. As to expression, expressed by the venom gland.

It localises to the secreted. The chain is Venom protein 22.1 from Lychas mucronatus (Chinese swimming scorpion).